A 296-amino-acid polypeptide reads, in one-letter code: Myozenin-1 (296 aa).

Ser-82 is subject to Phosphoserine. 2 stretches are compositionally biased toward gly residues: residues 105 to 117 (FSYGKGSSGGQAG) and 134 to 170 (SGFGAGGSGGPGGQAGGGGAPGTVGLGEPGSGDQAGG). Residues 105-172 (FSYGKGSSGG…GSGDQAGGDG (68 aa)) form a disordered region.

Belongs to the myozenin family. Interacts with ACTN2, ACTN3, FLNA, FLNB, FLNC, LDB3, PPP3CA and TCAP. Interacts via its C-terminal region with MYOT. Expressed primarily in skeletal muscle and specifically enriched in the gastrocnemius, which is composed predominantly of fast-twitch muscle fibers. Detected at lower levels in heart.

It is found in the nucleus. It localises to the cell projection. Its subcellular location is the pseudopodium. Myozenins may serve as intracellular binding proteins involved in linking Z-disk proteins such as alpha-actinin, gamma-filamin, TCAP/telethonin, LDB3/ZASP and localizing calcineurin signaling to the sarcomere. Plays an important role in the modulation of calcineurin signaling. May play a role in myofibrillogenesis. The protein is Myozenin-1 of Mus musculus (Mouse).